The chain runs to 197 residues: Ycf20-like protein (197 aa).

3 helical membrane-spanning segments follow: residues 113–133 (MKIF…TILG), 138–158 (WDVL…MLMY), and 173–193 (FVVF…VDAF).

The protein belongs to the ycf20 family.

The protein localises to the membrane. This Arabidopsis thaliana (Mouse-ear cress) protein is Ycf20-like protein.